The chain runs to 272 residues: Eukaryotic translation initiation factor 3 subunit G (272 aa).

2 disordered regions span residues 1-28 (MPAL…PTEI) and 157-188 (APTT…GRDD). In terms of domain architecture, RRM spans 190-268 (TAIRISNLSE…LILNVEWSKP (79 aa)).

This sequence belongs to the eIF-3 subunit G family. Component of the eukaryotic translation initiation factor 3 (eIF-3) complex.

It is found in the cytoplasm. Functionally, RNA-binding component of the eukaryotic translation initiation factor 3 (eIF-3) complex, which is involved in protein synthesis of a specialized repertoire of mRNAs and, together with other initiation factors, stimulates binding of mRNA and methionyl-tRNAi to the 40S ribosome. The eIF-3 complex specifically targets and initiates translation of a subset of mRNAs involved in cell proliferation. This subunit can bind 18S rRNA. The protein is Eukaryotic translation initiation factor 3 subunit G of Aedes aegypti (Yellowfever mosquito).